Reading from the N-terminus, the 310-residue chain is Zinc finger protein 42 homolog (310 aa).

Residues 1–15 (MSQQLKKRAKTRHQK) show a composition bias toward basic residues. The disordered stretch occupies residues 1–35 (MSQQLKKRAKTRHQKGLGGRAPSGAKPRQGKSSQD). C2H2-type zinc fingers lie at residues 188–212 (IACP…LLIH), 217–239 (HVCA…FLVH), 245–269 (FRCT…VRIH), and 275–299 (FVCP…ILTH). Glycyl lysine isopeptide (Lys-Gly) (interchain with G-Cter in ubiquitin) cross-links involve residues Lys231 and Lys233.

It belongs to the krueppel C2H2-type zinc-finger protein family. In terms of processing, polyubiquitinated by RNF12, leading to proteasomal degradation. In terms of tissue distribution, expressed in kidney, epidermal keratinocytes, prostate epithelial cells, bronchial and small airway lung epithelial cells (at protein level). Expressed in malignant kidney and several carcinoma cell lines (at protein level). Expressed in embryonic stem cells, kidney, epidermal keratinocytes, prostate epithelial cells, bronchial and small airway lung epithelial cells. Expressed in embryonal carcinomas, seminomas, malignant kidney and several carcinoma cell lines.

The protein localises to the nucleus. Its function is as follows. Involved in the reprogramming of X-chromosome inactivation during the acquisition of pluripotency. Required for efficient elongation of TSIX, a non-coding RNA antisense to XIST. Binds DXPas34 enhancer within the TSIX promoter. Involved in ES cell self-renewal. This chain is Zinc finger protein 42 homolog (ZFP42), found in Homo sapiens (Human).